A 367-amino-acid polypeptide reads, in one-letter code: Ribosomal RNA large subunit methyltransferase M (367 aa).

S-adenosyl-L-methionine-binding positions include serine 189, 222–225 (CPGG), aspartate 241, aspartate 261, and aspartate 278. Lysine 307 functions as the Proton acceptor in the catalytic mechanism.

This sequence belongs to the class I-like SAM-binding methyltransferase superfamily. RNA methyltransferase RlmE family. RlmM subfamily. As to quaternary structure, monomer.

Its subcellular location is the cytoplasm. It catalyses the reaction cytidine(2498) in 23S rRNA + S-adenosyl-L-methionine = 2'-O-methylcytidine(2498) in 23S rRNA + S-adenosyl-L-homocysteine + H(+). In terms of biological role, catalyzes the 2'-O-methylation at nucleotide C2498 in 23S rRNA. The polypeptide is Ribosomal RNA large subunit methyltransferase M (Shewanella denitrificans (strain OS217 / ATCC BAA-1090 / DSM 15013)).